A 119-amino-acid chain; its full sequence is MKQFGFTRLMRLVDPGDFKQIFAAGERVSSKAFTVLYHSNSLEYPRLGMAIPRKHFSRAVDRNRIKRLVRESFRQRQQVLGGRDLVVLSKPGINRHPNSDLLRCLERQWIGLVKQCSDS.

It belongs to the RnpA family. In terms of assembly, consists of a catalytic RNA component (M1 or rnpB) and a protein subunit.

It carries out the reaction Endonucleolytic cleavage of RNA, removing 5'-extranucleotides from tRNA precursor.. Its function is as follows. RNaseP catalyzes the removal of the 5'-leader sequence from pre-tRNA to produce the mature 5'-terminus. It can also cleave other RNA substrates such as 4.5S RNA. The protein component plays an auxiliary but essential role in vivo by binding to the 5'-leader sequence and broadening the substrate specificity of the ribozyme. The sequence is that of Ribonuclease P protein component from Nitrosococcus oceani (strain ATCC 19707 / BCRC 17464 / JCM 30415 / NCIMB 11848 / C-107).